We begin with the raw amino-acid sequence, 215 residues long: Ribosomal RNA small subunit methyltransferase G (215 aa).

Residues glycine 78, leucine 83, 128–129 (AE), and arginine 146 contribute to the S-adenosyl-L-methionine site.

The protein belongs to the methyltransferase superfamily. RNA methyltransferase RsmG family.

The protein resides in the cytoplasm. The catalysed reaction is guanosine(527) in 16S rRNA + S-adenosyl-L-methionine = N(7)-methylguanosine(527) in 16S rRNA + S-adenosyl-L-homocysteine. Its function is as follows. Specifically methylates the N7 position of guanine in position 527 of 16S rRNA. The polypeptide is Ribosomal RNA small subunit methyltransferase G (Anaeromyxobacter dehalogenans (strain 2CP-C)).